The following is a 1021-amino-acid chain: Ephrin type-B receptor 6 (1021 aa).

Residues 1–31 form the signal peptide; sequence MATEGAAQLGNRVAGMVCSLWVLLLVSSVLA. The Extracellular segment spans residues 32–594; sequence LEEVLLDTTG…LSSQLPERLS (563 aa). An Eph LBD domain is found at 33–237; it reads EEVLLDTTGE…FSYTCPAVLR (205 aa). The segment at 163–182 is disordered; that stretch reads SFPSSSSSSSSSSSAAWAVG. Low complexity predominate over residues 166–176; that stretch reads SSSSSSSSSSS. 2 consecutive Fibronectin type-III domains span residues 369–486 and 487–582; these read PPSA…TSHE and VPSA…TLPQ. The N-linked (GlcNAc...) asparagine glycan is linked to asparagine 480. Residues 595–615 traverse the membrane as a helical segment; the sequence is LVIGSILGALAFLLLAAITVL. Topologically, residues 616–1021 are cytoplasmic; the sequence is AVVFQRKRRG…HLRQQGSVEV (406 aa). The region spanning 670–919 is the Protein kinase domain; the sequence is IKIEEVIGTG…QLVAAFDKMI (250 aa). 676–684 provides a ligand contact to ATP; the sequence is IGTGSFGEV. The region spanning 948–1012 is the SAM domain; the sequence is PCLDSPQAWL…LHHIQLLQQH (65 aa). The PDZ-binding motif lies at 1019 to 1021; sequence VEV.

It belongs to the protein kinase superfamily. Tyr protein kinase family. Ephrin receptor subfamily. As to quaternary structure, interacts with CBL and EPHB1. Interacts with FYN; this interaction takes place in a ligand-independent manner. Ligand-binding increases phosphorylation on tyrosine residues. Phosphorylation on tyrosine residues is mediated by transphosphorylation by the catalytically active EPHB1 in a ligand-independent manner. Tyrosine phosphorylation of the receptor may act as a switch on the functional transition from cell adhesion/attraction to de-adhesion/repulsion. As to expression, expressed in brain. Expressed in non invasive breast carcinoma cell lines (at protein level). Strong expression in brain and pancreas, and weak expression in other tissues, such as heart, placenta, lung, liver, skeletal muscle and kidney. Expressed in breast non invasive tumors but not in metastatic lesions. Isoform 3 is expressed in cell lines of glioblastomas, anaplastic astrocytomas, gliosarcomas and astrocytomas. Isoform 3 is not detected in normal tissues.

The protein resides in the membrane. It is found in the secreted. Functionally, kinase-defective receptor for members of the ephrin-B family. Binds to ephrin-B1 and ephrin-B2. Modulates cell adhesion and migration by exerting both positive and negative effects upon stimulation with ephrin-B2. Inhibits JNK activation, T-cell receptor-induced IL-2 secretion and CD25 expression upon stimulation with ephrin-B2. This Homo sapiens (Human) protein is Ephrin type-B receptor 6 (EPHB6).